Reading from the N-terminus, the 324-residue chain is Beta-ketoacyl-[acyl-carrier-protein] synthase III (324 aa).

Catalysis depends on residues cysteine 112 and histidine 249. Residues 250 to 254 (QANRR) form an ACP-binding region. The active site involves asparagine 279.

The protein belongs to the thiolase-like superfamily. FabH family. Homodimer.

The protein localises to the cytoplasm. The catalysed reaction is malonyl-[ACP] + acetyl-CoA + H(+) = 3-oxobutanoyl-[ACP] + CO2 + CoA. It participates in lipid metabolism; fatty acid biosynthesis. Catalyzes the condensation reaction of fatty acid synthesis by the addition to an acyl acceptor of two carbons from malonyl-ACP. Catalyzes the first condensation reaction which initiates fatty acid synthesis and may therefore play a role in governing the total rate of fatty acid production. Possesses both acetoacetyl-ACP synthase and acetyl transacylase activities. Its substrate specificity determines the biosynthesis of branched-chain and/or straight-chain of fatty acids. This chain is Beta-ketoacyl-[acyl-carrier-protein] synthase III, found in Streptococcus equi subsp. zooepidemicus (strain MGCS10565).